The sequence spans 347 residues: NADH-quinone oxidoreductase subunit H (347 aa).

8 helical membrane passes run 13–33, 82–102, 115–135, 161–181, 198–218, 248–268, 286–306, and 325–345; these read LIIALKSVVLLVVLLIVVAYL, GVFLLAPFIFAVLAMATWAVI, VGILYIFAISSLEVYGVIMGG, IGFVIVTVLLTVGSLNLTDIV, FLDWNWLCLFPMFVVFFISAL, FLLFFLGEYVAITLMCALMTV, VPGIIWFMLKLCFCFFLFAMV, and VFLPISLFMVVATATFLKVFG.

It belongs to the complex I subunit 1 family. NDH-1 is composed of 14 different subunits. Subunits NuoA, H, J, K, L, M, N constitute the membrane sector of the complex.

It localises to the cell inner membrane. The enzyme catalyses a quinone + NADH + 5 H(+)(in) = a quinol + NAD(+) + 4 H(+)(out). In terms of biological role, NDH-1 shuttles electrons from NADH, via FMN and iron-sulfur (Fe-S) centers, to quinones in the respiratory chain. The immediate electron acceptor for the enzyme in this species is believed to be ubiquinone. Couples the redox reaction to proton translocation (for every two electrons transferred, four hydrogen ions are translocated across the cytoplasmic membrane), and thus conserves the redox energy in a proton gradient. This subunit may bind ubiquinone. In Brucella melitensis biotype 1 (strain ATCC 23456 / CCUG 17765 / NCTC 10094 / 16M), this protein is NADH-quinone oxidoreductase subunit H.